Consider the following 381-residue polypeptide: MASPPACPSEEDESLKGCELYVQLHGIQQVLKDCIVHLCISKPERPMKFLREHFEKLEKEENRQILARQKSNSQSDSHDEEVSPTPPNPVVKARRRRGGVSAEVYTEEDAVSYVRKVIPKDYKTMTALAKAISKNVLFAHLDDNERSDIFDAMFPVTHIAGETVIQQGNEGDNFYVVDQGEVDVYVNGEWVTNISEGGSFGELALIYGTPRAATVKAKTDLKLWGIDRDSYRRILMGSTLRKRKMYEEFLSKVSILESLEKWERLTVADALEPVQFEDGEKIVVQGEPGDDFYIITEGTASVLQRRSPNEEYVEVGRLGPSDYFGEIALLLNRPRAATVVARGPLKCVKLDRPRFERVLGPCSEILKRNIQRYNSFISLTV.

The tract at residues 2 to 136 is dimerization and phosphorylation; the sequence is ASPPACPSEE…ALAKAISKNV (135 aa). Position 3 is a phosphoserine (Ser-3). At Tyr-21 the chain carries 3'-nitrotyrosine. Residues 67–98 are disordered; it reads ARQKSNSQSDSHDEEVSPTPPNPVVKARRRRG. Phosphoserine occurs at positions 77 and 83. Phosphothreonine is present on Thr-85. The Pseudophosphorylation motif motif lies at 96–100; sequence RRGGV. Position 97 is an omega-N-methylarginine (Arg-97). Residues 137-254, Glu-202, Arg-211, 255-381, Glu-326, and Arg-335 contribute to the 3',5'-cyclic AMP site; these read LFAH…SKVS and ILES…SLTV.

This sequence belongs to the cAMP-dependent kinase regulatory chain family. The inactive holoenzyme is composed of two regulatory chains and two catalytic chains. Activation by cAMP releases the two active catalytic monomers and the regulatory dimer. Interacts with PRKX; regulates this cAMP-dependent protein kinase. Interacts with C2orf88/smAKAP; this interaction may target PRKAR1B to the plasma membrane. The pseudophosphorylation site binds to the substrate-binding region of the catalytic chain, resulting in the inhibition of its activity. As to expression, four types of regulatory chains are found: I-alpha, I-beta, II-alpha, and II-beta. Their expression varies among tissues and is in some cases constitutive and in others inducible.

The protein localises to the cell membrane. Functionally, regulatory subunit of the cAMP-dependent protein kinases involved in cAMP signaling in cells. The sequence is that of cAMP-dependent protein kinase type I-beta regulatory subunit (PRKAR1B) from Homo sapiens (Human).